The following is a 489-amino-acid chain: Adenylosuccinate synthetase 2, chloroplastic (489 aa).

A chloroplast-targeting transit peptide spans 1–45 (MPFSPPCLDPAAAAAASLSFLPAAAARPPAPCAVAPRSRRALRVA). GTP-binding positions include 76–82 (GDEGKGK) and 104–106 (GHT). The Proton acceptor role is filled by Asp77. Positions 77 and 104 each coordinate Mg(2+). IMP contacts are provided by residues 77 to 80 (DEGK), 102 to 105 (NAGH), Thr194, Arg208, Gln288, Thr303, and Arg367. His105 (proton donor) is an active-site residue. 363-369 (TTTGRPR) contributes to the substrate binding site. Residues Arg369, 395 to 397 (KLD), and 478 to 480 (GVG) each bind GTP.

The protein belongs to the adenylosuccinate synthetase family. In terms of assembly, homodimer. Requires Mg(2+) as cofactor.

It localises to the plastid. The protein localises to the chloroplast. It catalyses the reaction IMP + L-aspartate + GTP = N(6)-(1,2-dicarboxyethyl)-AMP + GDP + phosphate + 2 H(+). The protein operates within purine metabolism; AMP biosynthesis via de novo pathway; AMP from IMP: step 1/2. Plays an important role in the de novo pathway and in the salvage pathway of purine nucleotide biosynthesis. Catalyzes the first committed step in the biosynthesis of AMP from IMP. This chain is Adenylosuccinate synthetase 2, chloroplastic, found in Oryza sativa subsp. japonica (Rice).